A 292-amino-acid polypeptide reads, in one-letter code: AKT-interacting protein (292 aa).

A compositionally biased stretch (polar residues) spans 1 to 11; sequence MNPLWSMSSGS. Positions 1-64 are disordered; that stretch reads MNPLWSMSSG…SPAPAAQSTN (64 aa). A compositionally biased stretch (basic and acidic residues) spans 14-23; that stretch reads KRAEGEEKTL. Residue Ser-30 is modified to Phosphoserine. The UBC core domain maps to 74–222; it reads YLEYSLLAEF…VVDSVKVCTA (149 aa).

The protein belongs to the ubiquitin-conjugating enzyme family. FTS subfamily. As to quaternary structure, component of the FTS/Hook/FHIP complex (FHF complex), composed of AKTIP/FTS, FHIP1B, and one or more members of the Hook family of proteins HOOK1, HOOK2, and HOOK3. Interacts directly with HOOK1, HOOK2 and HOOK3. The FHF complex associates with the homotypic vesicular sorting complex (the HOPS complex). Also interacts with AKT1. May interact with FHIP1A.

Its subcellular location is the cytoplasm. The protein resides in the cell membrane. Its function is as follows. Component of the FTS/Hook/FHIP complex (FHF complex). The FHF complex may function to promote vesicle trafficking and/or fusion via the homotypic vesicular protein sorting complex (the HOPS complex). Regulates apoptosis by enhancing phosphorylation and activation of AKT1. Increases release of TNFSF6 via the AKT1/GSK3B/NFATC1 signaling cascade. FHF complex promotes the distribution of AP-4 complex to the perinuclear area of the cell. This is AKT-interacting protein (Aktip) from Rattus norvegicus (Rat).